We begin with the raw amino-acid sequence, 706 residues long: DNA ligase (706 aa).

Residues 47-51 (DSEYD), 96-97 (SI), and glutamate 133 contribute to the NAD(+) site. The active-site N6-AMP-lysine intermediate is lysine 135. NAD(+)-binding residues include arginine 156, glutamate 192, lysine 323, and lysine 347. Zn(2+) is bound by residues cysteine 441, cysteine 444, cysteine 459, and cysteine 465. Residues 624-706 (VAPKPLSGKT…MRLLASAEAE (83 aa)) enclose the BRCT domain.

The protein belongs to the NAD-dependent DNA ligase family. LigA subfamily. Mg(2+) is required as a cofactor. Mn(2+) serves as cofactor.

The enzyme catalyses NAD(+) + (deoxyribonucleotide)n-3'-hydroxyl + 5'-phospho-(deoxyribonucleotide)m = (deoxyribonucleotide)n+m + AMP + beta-nicotinamide D-nucleotide.. DNA ligase that catalyzes the formation of phosphodiester linkages between 5'-phosphoryl and 3'-hydroxyl groups in double-stranded DNA using NAD as a coenzyme and as the energy source for the reaction. It is essential for DNA replication and repair of damaged DNA. In Polaromonas sp. (strain JS666 / ATCC BAA-500), this protein is DNA ligase.